We begin with the raw amino-acid sequence, 297 residues long: MGFVKVVKNKAYFKRYQVRFRRRREGKTDYYARKRLVIQDKNKYNTPKYRMIVRVTNRDIICQIAYARIEGDMIVCAAYAHELPKYGVKVGLTNYAAAYCTGLLLARRLLNRFGMDKIYEGQVEVNGDEYNVESIDGQPGAFTCYLDAGLARTTTGNKVFGALKGAVDGGLSIPHSTKRFPGYDSESKEFNAEVHRKHIMGQNVADYMRYLMEEDEDAYKKQFSQYIKNNVTPDMMEEMYKKAHAAIRENPVYEKKPKREVKKKRWNRPKMSLAQKKDRVAQKKASFLRAQERAAES.

Residue Gly-2 is modified to N-acetylglycine. N6-acetyllysine is present on residues Lys-5 and Lys-48. Ser-185 is modified (phosphoserine). Lys-220 is modified (N6-acetyllysine; alternate). A Glycyl lysine isopeptide (Lys-Gly) (interchain with G-Cter in SUMO1); alternate cross-link involves residue Lys-220. A Glycyl lysine isopeptide (Lys-Gly) (interchain with G-Cter in SUMO2); alternate cross-link involves residue Lys-220. Phosphothreonine is present on Thr-232. Residues 253-297 (YEKKPKREVKKKRWNRPKMSLAQKKDRVAQKKASFLRAQERAAES) form a disordered region. Basic residues predominate over residues 258 to 268 (KREVKKKRWNR). Ser-272 carries the phosphoserine modification.

It belongs to the universal ribosomal protein uL18 family. In terms of assembly, component of the large ribosomal subunit (LSU). Part of the 5S RNP complex, which is a LSU subcomplex composed of the 5S RNA, RPL5 and RPL11. Component of a hexameric 5S RNP precursor complex, composed of 5S RNA, RRS1, RPF2/BXDC1, RPL5, RPL11 and HEATR3; this complex acts as a precursor for ribosome assembly. Interacts with NVL in an ATP-dependent manner. Interacts with RRP1B. Interacts with IPO5, IPO7 and KPNB1; these interactions may be involved in RPL5 nuclear import for the assembly of ribosomal subunits. Interacts with RRP1B.

The protein localises to the cytoplasm. Its subcellular location is the nucleus. It localises to the nucleolus. Its function is as follows. Component of the ribosome, a large ribonucleoprotein complex responsible for the synthesis of proteins in the cell. The small ribosomal subunit (SSU) binds messenger RNAs (mRNAs) and translates the encoded message by selecting cognate aminoacyl-transfer RNA (tRNA) molecules. The large subunit (LSU) contains the ribosomal catalytic site termed the peptidyl transferase center (PTC), which catalyzes the formation of peptide bonds, thereby polymerizing the amino acids delivered by tRNAs into a polypeptide chain. The nascent polypeptides leave the ribosome through a tunnel in the LSU and interact with protein factors that function in enzymatic processing, targeting, and the membrane insertion of nascent chains at the exit of the ribosomal tunnel. As part of the 5S RNP/5S ribonucleoprotein particle it is an essential component of the LSU, required for its formation and the maturation of rRNAs. It also couples ribosome biogenesis to p53/TP53 activation. As part of the 5S RNP it accumulates in the nucleoplasm and inhibits MDM2, when ribosome biogenesis is perturbed, mediating the stabilization and the activation of TP53. This chain is Large ribosomal subunit protein uL18 (Rpl5), found in Rattus norvegicus (Rat).